Here is a 335-residue protein sequence, read N- to C-terminus: Cytoskeleton protein RodZ (335 aa).

Residues 1–111 (MNTEATHDQN…LGKRRKKRDG (111 aa)) lie on the Cytoplasmic side of the membrane. The 53-residue stretch at 19-71 (LRNAREQLGLSQQAVAERLCLKVSTVRDIEEDKAPADLASTFLRGYIRSYARL) folds into the HTH cro/C1-type domain. Residues 30–49 (QQAVAERLCLKVSTVRDIEE) constitute a DNA-binding region (H-T-H motif). A helical; Signal-anchor for type II membrane protein transmembrane segment spans residues 112 to 132 (WLMTFTWLVLFVVIGLSGAWW). Topologically, residues 133-335 (WQDHKAQQEE…TLNAEQSPAQ (203 aa)) are periplasmic. A compositionally biased stretch (polar residues) spans 148 to 164 (DQSSAELNNNQSQSVPL). Residues 148-244 (DQSSAELNNN…PLPTDQAGVT (97 aa)) form a disordered region. 2 stretches are compositionally biased toward low complexity: residues 165–205 (DTST…DPQQ) and 217–239 (DTAA…LPTD).

It belongs to the RodZ family.

The protein localises to the cell inner membrane. Cytoskeletal protein that is involved in cell-shape control through regulation of the length of the long axis. The sequence is that of Cytoskeleton protein RodZ from Escherichia coli O81 (strain ED1a).